We begin with the raw amino-acid sequence, 291 residues long: Ribonuclease Z (291 aa).

Positions 61, 63, 65, 66, 133, 201, and 257 each coordinate Zn(2+). The active-site Proton acceptor is the Asp-65.

The protein belongs to the RNase Z family. Homodimer. Zn(2+) serves as cofactor.

The enzyme catalyses Endonucleolytic cleavage of RNA, removing extra 3' nucleotides from tRNA precursor, generating 3' termini of tRNAs. A 3'-hydroxy group is left at the tRNA terminus and a 5'-phosphoryl group is left at the trailer molecule.. Its function is as follows. Zinc phosphodiesterase, which displays some tRNA 3'-processing endonuclease activity. Probably involved in tRNA maturation, by removing a 3'-trailer from precursor tRNA. The protein is Ribonuclease Z of Saccharolobus islandicus (strain L.S.2.15 / Lassen #1) (Sulfolobus islandicus).